Reading from the N-terminus, the 346-residue chain is 26S proteasome non-ATPase regulatory subunit 4 (346 aa).

The VWFA domain maps to Ser-5 to Val-190. UIM domains follow at residues Glu-216–Arg-235 and Thr-273–Ala-292. Positions Ala-290–Lys-346 are disordered. A compositionally biased stretch (basic and acidic residues) spans Ala-337–Lys-346.

It belongs to the proteasome subunit S5A family. As to quaternary structure, the 26S proteasome is composed of a core protease, known as the 20S proteasome, capped at one or both ends by the 19S regulatory complex (RC). The RC is composed of at least 18 different subunits in two subcomplexes, the base and the lid, which form the portions proximal and distal to the 20S proteolytic core, respectively. Broadly expressed with high expression in the pharynx, intestine, hypodermis and spermatheca and weak expression in the excretory cell, body wall muscle, vulva and somatic gonad.

Its subcellular location is the cytoplasm. The protein resides in the nucleus. In terms of biological role, binds and presumably selects ubiquitin-conjugates for destruction. Required for protein degradation and ubiquitin-proteasome system (UBS) function and regulates proteasomal subunit expression. Involvement in UBS might be cell type specific. Regulator of the autophagy-lysosome pathway that may confer resistance to autophagy by regulating the expression of autophagy-related proteins such as lgg-1, and by regulating lysosome formation, possibly by modulating elt-2 activity. Required for fertility, sperm production, and sex determination through regulation of tra-2 protein. Plays a role in the elimination of paternal mitochondria in fertilized eggs. The polypeptide is 26S proteasome non-ATPase regulatory subunit 4 (Caenorhabditis elegans).